A 281-amino-acid chain; its full sequence is MPLSALESTINAAFDARDTVSAATKGEVRDAVEQALDLLDKGEVRVAAREASGAWVVNQWLKKAVLLSFRLNDMTTISGGPGGASWWDKVPSKFYGWGENRFRDAGFRAVPGAIVRRSAFIGKNVVLMPSFVNLGAYVDEATMVDTWSTVGSCAQIGKRVHISGGVGIGGVLEPLQAGPVIIEDDCFIGARAEVAEGVIVRRGAVLAMGVFLGASTKIVDRTTGEIFIGEVPEYSVVVPGALPGKPMANGEPGPATACAVIVKRVDERTRSKTSINELLRD.

Arg108 and Asp145 together coordinate substrate.

The protein belongs to the transferase hexapeptide repeat family. As to quaternary structure, homotrimer.

Its subcellular location is the cytoplasm. The enzyme catalyses (S)-2,3,4,5-tetrahydrodipicolinate + succinyl-CoA + H2O = (S)-2-succinylamino-6-oxoheptanedioate + CoA. It functions in the pathway amino-acid biosynthesis; L-lysine biosynthesis via DAP pathway; LL-2,6-diaminopimelate from (S)-tetrahydrodipicolinate (succinylase route): step 1/3. This chain is 2,3,4,5-tetrahydropyridine-2,6-dicarboxylate N-succinyltransferase, found in Rhodopseudomonas palustris (strain BisA53).